The following is a 613-amino-acid chain: Transcription factor cbf11 (613 aa).

The interval 32-58 (NNGLHNQEDGAGGRNENSERVGSGSPG) is disordered.

Belongs to the Su(H) family.

It localises to the cytoplasm. The protein resides in the nucleus. Transcription factor that behaves as a negative regulator of adhesion. Recognizes specifically the canonical CSL response element GTGA/GGAA. May also play a cbf12-antagonistic role in the regulation of a number of other important processes such as extracellular material production, colony morphogenesis, ploidy maintenance, or meiosis. This Schizosaccharomyces pombe (strain 972 / ATCC 24843) (Fission yeast) protein is Transcription factor cbf11 (cbf11).